We begin with the raw amino-acid sequence, 252 residues long: Enolase-phosphatase E1 (252 aa).

Residues Asp14 and Glu16 each coordinate Mg(2+). Substrate contacts are provided by residues 142 to 143 (SS) and Lys176. Mg(2+) is bound at residue Asp201.

This sequence belongs to the HAD-like hydrolase superfamily. MasA/MtnC family. As to quaternary structure, monomer. Mg(2+) is required as a cofactor.

The protein localises to the cytoplasm. Its subcellular location is the nucleus. The enzyme catalyses 5-methylsulfanyl-2,3-dioxopentyl phosphate + H2O = 1,2-dihydroxy-5-(methylsulfanyl)pent-1-en-3-one + phosphate. The protein operates within amino-acid biosynthesis; L-methionine biosynthesis via salvage pathway; L-methionine from S-methyl-5-thio-alpha-D-ribose 1-phosphate: step 3/6. Its pathway is amino-acid biosynthesis; L-methionine biosynthesis via salvage pathway; L-methionine from S-methyl-5-thio-alpha-D-ribose 1-phosphate: step 4/6. In terms of biological role, bifunctional enzyme that catalyzes the enolization of 2,3-diketo-5-methylthiopentyl-1-phosphate (DK-MTP-1-P) into the intermediate 2-hydroxy-3-keto-5-methylthiopentenyl-1-phosphate (HK-MTPenyl-1-P), which is then dephosphorylated to form the acireductone 1,2-dihydroxy-3-keto-5-methylthiopentene (DHK-MTPene). This is Enolase-phosphatase E1 from Drosophila ananassae (Fruit fly).